Here is a 196-residue protein sequence, read N- to C-terminus: GTP cyclohydrolase-2 (196 aa).

Residue Arg49–Glu53 participates in GTP binding. Residues Cys54, Cys65, and Cys67 each coordinate Zn(2+). GTP-binding positions include Gln70, Glu92–Arg94, and Thr114. The active-site Proton acceptor is the Asp126. The Nucleophile role is filled by Arg128. Thr149 and Lys154 together coordinate GTP.

It belongs to the GTP cyclohydrolase II family. In terms of assembly, homodimer. The cofactor is Zn(2+).

It catalyses the reaction GTP + 4 H2O = 2,5-diamino-6-hydroxy-4-(5-phosphoribosylamino)-pyrimidine + formate + 2 phosphate + 3 H(+). It functions in the pathway cofactor biosynthesis; riboflavin biosynthesis; 5-amino-6-(D-ribitylamino)uracil from GTP: step 1/4. Functionally, catalyzes the conversion of GTP to 2,5-diamino-6-ribosylamino-4(3H)-pyrimidinone 5'-phosphate (DARP), formate and pyrophosphate. The protein is GTP cyclohydrolase-2 of Salmonella choleraesuis (strain SC-B67).